Consider the following 614-residue polypeptide: Vitamin B12 transporter BtuB (614 aa).

The N-terminal stretch at 1–20 is a signal peptide; that stretch reads MIKKATLLTAFSVTAFSAWA. A TonB box motif is present at residues 26-33; sequence DTLVVTAN. The TBDR plug domain maps to 38–152; that stretch reads PRSAVLAPVT…IGGVVNIITT (115 aa). Cyanocob(III)alamin is bound by residues Ser-85, Asn-92, and 110-111; that span reads VS. A TBDR beta-barrel domain is found at 155 to 614; it reads NPGTELTAGW…EYTLSGSYTF (460 aa). 3 beta stranded membrane-spanning segments follow: residues 158-165, 169-178, and 184-195; these read TELTAGWG, YQNYDISTQQ, and TRATLIGDYEYT. The Ca(2+) site is built by Asp-199, Gln-211, Asp-213, and Asp-215. Transmembrane regions (beta stranded) follow at residues 217 to 227 and 232 to 248; these read FLSKTLYGALE and DRWSGFVRGYGYDNRTD. The Ca(2+) site is built by Tyr-249 and Asp-250. Cyanocob(III)alamin is bound at residue Ala-251. Residue Asp-261 participates in Ca(2+) binding. Beta stranded transmembrane passes span 263–277, 279–296, 309–325, 328–337, 353–369, 371–381, 385–400, 403–417, 434–443, 449–458, 473–490, 494–509, 517–529, and 535–550; these read RKLYSQSWDAGLHFN, ERIQSQLVSSYSHSKDYN, TLDEMKQYNVQWTNSVV, HGNVGAGVDW, YDQRNTGVYLTGLQQLG, FTLEAAARSDD, FGRHGTWQTSAGWEFI, YRFIASYGTSYKAPN, KSKQWEGAFE, VSWRISGYRN, YYNEGKARIKGIEATANF, PLTHTVSYDYVDARNA, RRSKQMAKYQLDW, and DWGMTYQYLGSRYDSD. Thr-309 contacts cyanocob(III)alamin. Arg-517 is a binding site for cyanocob(III)alamin. Position 551 (Tyr-551) interacts with cyanocob(III)alamin. A run of 3 beta stranded transmembrane segments spans residues 558 to 572, 585 to 596, and 602 to 614; these read TVKMGGVSLWDLTVA, IANLFDKDYETV, and AGREYTLSGSYTF. Positions 597–614 match the TonB C-terminal box motif; it reads YGYQTAGREYTLSGSYTF.

This sequence belongs to the TonB-dependent receptor family. BtuB (TC 1.B.14.3.1) subfamily.

The protein localises to the cell outer membrane. Functionally, involved in the active translocation of vitamin B12 (cyanocobalamin) across the outer membrane to the periplasmic space. It derives its energy for transport by interacting with the trans-periplasmic membrane protein TonB. The protein is Vitamin B12 transporter BtuB of Salmonella typhimurium (strain LT2 / SGSC1412 / ATCC 700720).